We begin with the raw amino-acid sequence, 715 residues long: Coiled-coil domain-containing protein 170 (715 aa).

Coiled-coil stretches lie at residues 30–286, 360–418, and 478–656; these read VTRE…AGQQ, ESRD…LVSG, and ENKT…FREV. The segment at 355-591 is required for binding to microtubules and Golgi apparatus location; that stretch reads MDSREESRDR…DLNKSRDQLE (237 aa).

In terms of assembly, binds Golgi-associated microtubules.

It is found in the golgi apparatus. In terms of biological role, plays a role in Golgi-associated microtubules organization and stabilization. The protein is Coiled-coil domain-containing protein 170 of Homo sapiens (Human).